A 327-amino-acid polypeptide reads, in one-letter code: Prenyl transferase janC (327 aa).

The chain crosses the membrane as a helical span at residues 3 to 23 (FPGAGPILGAIAVSSCLYFLF). Residues K63 and H96 each contribute to the isopentenyl diphosphate site. Residues D103 and D107 each coordinate Mg(2+). Residues R112 and K196 each coordinate dimethylallyl diphosphate. N-linked (GlcNAc...) asparagine glycosylation occurs at N211.

The protein belongs to the FPP/GGPP synthase family.

It is found in the membrane. It participates in secondary metabolite biosynthesis. Its function is as follows. Prenyl transferase; part of the gene cluster that mediates the biosynthesis of the indole diterpenes janthitremanes such as shearinine K or shearinine A. The geranylgeranyl diphosphate (GGPP) synthase janG catalyzes the first step in janthitremane biosynthesis via conversion of farnesyl pyrophosphate and isopentyl pyrophosphate into geranylgeranyl pyrophosphate (GGPP). Condensation of indole-3-glycerol phosphate with GGPP by the prenyl transferase janC then forms 3-geranylgeranylindole (3-GGI). Epoxidation by the FAD-dependent monooxygenase janM leads to a epoxidized-GGI that is substrate of the terpene cyclase janB for cyclization to yield paspaline. Paspaline is subsequently converted to 13-desoxypaspaline by the cytochrome P450 monooxygenase janP, via beta-PC-M6 in a series of alpha-face oxidations. The cytochrome P450 monooxygenase janQ is proposed to carry out sequential beta-face oxidation steps at C-7 and C-13 of 13-desoxypaspaline to form paspalicine and paspalinine respectively. The indole diterpene prenyltransferase janD may then convert paspalinine into shearinine K which is substrate of janO and/or additional enzymes for oxidation and cyclization to generate shearinine A. This is Prenyl transferase janC from Penicillium janthinellum (Penicillium vitale).